We begin with the raw amino-acid sequence, 55 residues long: Rubredoxin-1 (55 aa).

Residues 1 to 54 (MKKWQCVVCGLIYDEAKGWPEEGIEAGTRWEDVPEDWLCPDCGVGKLDFEMIEI) enclose the Rubredoxin-like domain. Cysteine 6, cysteine 9, cysteine 39, and cysteine 42 together coordinate Fe cation.

The protein belongs to the rubredoxin family. Fe(3+) is required as a cofactor.

It is found in the cytoplasm. It participates in hydrocarbon metabolism; alkane degradation. In terms of biological role, involved in the hydrocarbon hydroxylating system, which transfers electrons from NADH to rubredoxin reductase and then through rubredoxin to alkane 1 monooxygenase. The chain is Rubredoxin-1 (rubA1) from Pseudomonas aeruginosa (strain ATCC 15692 / DSM 22644 / CIP 104116 / JCM 14847 / LMG 12228 / 1C / PRS 101 / PAO1).